Consider the following 309-residue polypeptide: DSC E3 ubiquitin ligase complex subunit C (309 aa).

Asparagine 61 is a glycosylation site (N-linked (GlcNAc...) asparagine). Disordered regions lie at residues 88–110 and 148–177; these read LPPS…GKGK and EQAD…FDRL. The next 2 helical transmembrane spans lie at 257–277 and 289–309; these read DDML…AMWL and GLAV…RIMN.

The protein belongs to the dsc3 family. As to quaternary structure, component of the DSC E3 ubiquitin ligase complex composed of dscA, dscB, dscC and dscD.

The protein localises to the endoplasmic reticulum membrane. Its pathway is protein modification; protein ubiquitination. Functionally, component of the DSC E3 ubiquitin ligase complex which is required for the srbA transcriptional activator proteolytic cleavage to release the soluble transcription factor from the membrane in low oxygen or sterol conditions. Required for growth during hypoxia and triazole drug susceptibility, as well as for virulence in a murine model of invasive pulmonary aspergillosis (IPA). The sequence is that of DSC E3 ubiquitin ligase complex subunit C from Aspergillus fumigatus (strain ATCC MYA-4609 / CBS 101355 / FGSC A1100 / Af293) (Neosartorya fumigata).